Here is a 164-residue protein sequence, read N- to C-terminus: Glutamate uptake regulatory protein (164 aa).

The HTH asnC-type domain maps to 5–66; that stretch reads LDDFDIKILD…LLDPQKIGLG (62 aa). The segment at residues 24–43 is a DNA-binding region (H-T-H motif); the sequence is MAELSEKTGLSANACWRRIR.

Its function is as follows. Represses the secondary, H(+)-coupled glutamate uptake system (Gluemp) genes. The protein is Glutamate uptake regulatory protein (grp) of Zymomonas mobilis subsp. mobilis (strain ATCC 31821 / ZM4 / CP4).